Consider the following 192-residue polypeptide: Casparian strip membrane protein 2 (192 aa).

Residues 1 to 31 (MTKDVVVEHGESSKAPLVAAPAASGVGRAAS) lie on the Cytoplasmic side of the membrane. A helical membrane pass occupies residues 32–52 (VADVFLRFLAIVGTIASAISM). Residues 53–79 (GTTNETLPFFTQFIQFEAKYSDLPSFT) lie on the Extracellular side of the membrane. Residue asparagine 56 is glycosylated (N-linked (GlcNAc...) asparagine). Residues 80-100 (FFVAANAVVCTYLVLSIPLSI) traverse the membrane as a helical segment. At 101 to 112 (VHIVRPRARYSR) the chain is on the cytoplasmic side. Residues 113 to 133 (LVLVFFDAAMLTLLTAGASAA) form a helical membrane-spanning segment. Topologically, residues 134 to 166 (AAIVYLAHKGNVRANWFAICQQFDSFCERISGS) are extracellular. The chain crosses the membrane as a helical span at residues 167–187 (LIGSFAAMVLLIMLIFLSAFA). Residues 188 to 192 (LARRH) are Cytoplasmic-facing.

This sequence belongs to the Casparian strip membrane proteins (CASP) family. Homodimer and heterodimers.

Its subcellular location is the cell membrane. Functionally, regulates membrane-cell wall junctions and localized cell wall deposition. Required for establishment of the Casparian strip membrane domain (CSD) and the subsequent formation of Casparian strips, a cell wall modification of the root endodermis that determines an apoplastic barrier between the intraorganismal apoplasm and the extraorganismal apoplasm and prevents lateral diffusion. The protein is Casparian strip membrane protein 2 of Panicum virgatum (Blackwell switchgrass).